The chain runs to 441 residues: N-succinylarginine dihydrolase (441 aa).

Substrate contacts are provided by residues 19–28 (AGLSFGNEAS), asparagine 110, and 137–138 (HR). Residue glutamate 174 is part of the active site. Residue arginine 212 coordinates substrate. Residue histidine 248 is part of the active site. Substrate contacts are provided by aspartate 250 and asparagine 359. Cysteine 365 serves as the catalytic Nucleophile.

The protein belongs to the succinylarginine dihydrolase family. As to quaternary structure, homodimer.

It catalyses the reaction N(2)-succinyl-L-arginine + 2 H2O + 2 H(+) = N(2)-succinyl-L-ornithine + 2 NH4(+) + CO2. Its pathway is amino-acid degradation; L-arginine degradation via AST pathway; L-glutamate and succinate from L-arginine: step 2/5. In terms of biological role, catalyzes the hydrolysis of N(2)-succinylarginine into N(2)-succinylornithine, ammonia and CO(2). In Cronobacter sakazakii (strain ATCC BAA-894) (Enterobacter sakazakii), this protein is N-succinylarginine dihydrolase.